The primary structure comprises 317 residues: Tumor-associated calcium signal transducer 2 (317 aa).

The N-terminal stretch at Met1–Ala24 is a signal peptide. At Gln25–Gly270 the chain is on the extracellular side. Asn27 is a glycosylation site (N-linked (GlcNAc...) asparagine). In terms of domain architecture, Thyroglobulin type-1 spans Thr64–Cys139. Cystine bridges form between Cys67–Cys102, Cys113–Cys119, and Cys121–Cys139. Asn114 carries an N-linked (GlcNAc...) asparagine glycan. N-linked (GlcNAc...) asparagine glycans are attached at residues Asn162 and Asn202. Residues Leu271 to Val291 form a helical membrane-spanning segment. The Cytoplasmic segment spans residues Thr292–Leu317.

Belongs to the EPCAM family.

The protein localises to the membrane. In terms of biological role, may function as a growth factor receptor. In Rattus norvegicus (Rat), this protein is Tumor-associated calcium signal transducer 2 (Tacstd2).